Reading from the N-terminus, the 361-residue chain is Trehalose 6-phosphate phosphatase RA3 (361 aa).

This sequence belongs to the trehalose phosphatase family. It depends on a divalent metal cation as a cofactor. In terms of tissue distribution, expressed in axillary inflorescence meristems.

It catalyses the reaction alpha,alpha-trehalose 6-phosphate + H2O = alpha,alpha-trehalose + phosphate. The protein operates within glycan biosynthesis; trehalose biosynthesis. Removes the phosphate from trehalose 6-phosphate to produce free trehalose. Is specific for trehalose 6-phosphate. Does not possess activity toward glucose, sucrose or fructose 6-phosphates. Regulates inflorescence branching. Required to establish the correct identity and determinacy of axillary meristems in both male and female inflorescences. May act through a sugar signal that moves into axillary meristems. Acts upstream of RA1. May have a transcriptional regulatory function. The polypeptide is Trehalose 6-phosphate phosphatase RA3 (Zea mays (Maize)).